A 705-amino-acid chain; its full sequence is MNPLQSIQHNITTPPISGGQPLDAVGPQAQKSHPKRISPSQLSQSAHQALERLSANAEHQRLASLVRKALQDGTFQFQSSNHTQVTYKASICLPADTDTVRTDLLINNELTVKARLNDQSEYDIVSAHLHGSSKAISFDVPSPPPAHGSASSVLSERTHLVMSRVLSQDAVDSSRLETSLLSSPDHSRPPSQPKPVHLGSVRRESGSLVSDNPVVQALLSFAQADQAFPPQAASIAGVQLEMRPRRDIEKALEEFKGAFTVEKAQLMSGANSSERVDEDVNADIHIPLLLKAIERGAAAFGPNASIGQNSAKAFLASCAPKITSNDDVLSEFINQKLKGDDDLQVRLGAQELLHVATKKEFQLGGLAGSIGVSSILGSAWELGASELLKNAIFGKNFSPSQYALQLAGIDSVPPLIIESMDTMCVLAIIKGMKGEEWSMSDLLPKALKAGAISSVVSFPNNVLQYAGFKSRVGDLAANSVTTEAAIFGAASGIPPEVKESEELMRAGLFQSMKDGVMAHPGEGVDTKKTIERMTRHALDIAPGESTAVKSMGLASIVGMIPLIASNKATGLLSEQVLRIFRSAVFNPIEAIALNALALGGRVNVPGLFDSDNAKHARVVQTILARASQHMEAGDRDISAEELHQMLAPRSEFLRHVGSAIVNGMNASFEAIPALVRKLGYGEAPLAERIPYQDLAVPDTSRQPAP.

Residues 1 to 15 are compositionally biased toward polar residues; the sequence is MNPLQSIQHNITTPP. Disordered regions lie at residues 1–40 and 175–205; these read MNPL…ISPS and RLET…RRES.

It localises to the secreted. Its function is as follows. Effector protein involved in non-host recognition. The sequence is that of Effector protein AvrPphDPsv (avrPphDPsv) from Pseudomonas savastanoi (Pseudomonas syringae pv. savastanoi).